Reading from the N-terminus, the 347-residue chain is Endophilin-A3 (347 aa).

The segment at 1–21 (MSVAGLKKQFHKASQLFSEKI) is membrane-binding amphipathic helix. The BAR domain maps to 18-249 (SEKISGAEGT…LELRISLASK (232 aa)). Positions 60–87 (PNPAYRAKLGMLNTVSKLRGQVKATGYP) are required for dimerization upon membrane association. The stretch at 180–201 (EEEIRQAVEKFEESKELAERSM) forms a coiled coil. An interaction with ARC region spans residues 218-254 (FVEAALDYHRQSTEILQELQSKLELRISLASKVPKRE). The disordered stretch occupies residues 255-288 (FMPKPVNMSSTDANGVGPSSSSKTPGTDTPADQP). Over residues 261–281 (NMSSTDANGVGPSSSSKTPGT) the composition is skewed to polar residues. Positions 285-344 (ADQPCCRGLYDFEPENEGELGFKEGDIITLTNQIDENWYEGMLRGESGFFPINYVEVIVP) constitute an SH3 domain.

It belongs to the endophilin family. Interacts with ARC, DNM1, SGIP1, SYNJ1 and DYDC1. Interacts with FASLG. Interacts with ATXN2. Interacts with BIN2.

The protein resides in the cytoplasm. It localises to the early endosome membrane. Its function is as follows. Implicated in endocytosis. May recruit other proteins to membranes with high curvature. This is Endophilin-A3 (Sh3gl3) from Mus musculus (Mouse).